The following is a 603-amino-acid chain: Proline--tRNA ligase (603 aa).

Belongs to the class-II aminoacyl-tRNA synthetase family. ProS type 1 subfamily. Homodimer.

It localises to the cytoplasm. It catalyses the reaction tRNA(Pro) + L-proline + ATP = L-prolyl-tRNA(Pro) + AMP + diphosphate. Its function is as follows. Catalyzes the attachment of proline to tRNA(Pro) in a two-step reaction: proline is first activated by ATP to form Pro-AMP and then transferred to the acceptor end of tRNA(Pro). As ProRS can inadvertently accommodate and process non-cognate amino acids such as alanine and cysteine, to avoid such errors it has two additional distinct editing activities against alanine. One activity is designated as 'pretransfer' editing and involves the tRNA(Pro)-independent hydrolysis of activated Ala-AMP. The other activity is designated 'posttransfer' editing and involves deacylation of mischarged Ala-tRNA(Pro). The misacylated Cys-tRNA(Pro) is not edited by ProRS. The chain is Proline--tRNA ligase from Prochlorococcus marinus (strain SARG / CCMP1375 / SS120).